The sequence spans 283 residues: Short-chain dehydrogenase anuB (283 aa).

NADP(+)-binding residues include Thr57, Asp78, Asn106, Tyr166, Lys170, Val199, and Thr201. The active-site Proton acceptor is Tyr166. Tyr166 functions as the Proton donor in the catalytic mechanism. Lys170 (lowers pKa of active site Tyr) is an active-site residue.

Belongs to the short-chain dehydrogenases/reductases (SDR) family.

The protein operates within secondary metabolite biosynthesis. Functionally, highly reducing polyketide synthase; part of the gene cluster that mediates the biosynthesis of annullatin D, an alkylated aromatic polyketide with a fused dihydrobenzofuran lactone ring system that exhibits potent agonistic activities toward the cannabinoid receptors. The annullatin backbone 2-hydroxymethyl-3-pentylphenol is assembled from one acetyl-CoA starter unit and 5 malonyl-CoA elongation units by cooperation of the highly reducing polyketide synthase anuA, the short-chain dehydrogenase anuB and the oxidoreductase anuC, before being hydroxylated at the C-5 alkyl chain by the cytochrome P450 monooxygenase anuE to form (8S)-annullatin E. The prenyltransferase anuH subsequently installs one isoprenyl group at the benzene ring to form (8S)-annullatin J. Enzymatic or nonenzymatic dihydro-benzofuran ring formation between the prenyl and the phenolic hydroxyl groups in (8S)-annullatin J results in two diastereomers (2S,9S)-annullatin H and compound 12. The intermediate (2S,9S)-annullatin H is then converted to (2S,9S)-annullatin D by the FAD-linked oxidoreductase anuG-catalyzed five-member lactone ring formation. The isomer 12 acts as a substrate for the short-chain dehydrogenase anuF and is oxidized to (2R)-annullatin F, which is subsequently acetylated by an acetyltransferase leading to (2R)-annullatin G formation. The remaining enzymes identified within the cluster, anuD, anuI and anuJ, seem not to be involved in annullatin biosynthesis. The protein is Short-chain dehydrogenase anuB of Penicillium roqueforti (strain FM164).